The sequence spans 152 residues: Transcriptional regulator MraZ (152 aa).

SpoVT-AbrB domains follow at residues 5 to 52 (ASAI…PLHE) and 81 to 124 (AQDC…EESA).

Belongs to the MraZ family. In terms of assembly, forms oligomers.

It is found in the cytoplasm. It localises to the nucleoid. The polypeptide is Transcriptional regulator MraZ (Shewanella frigidimarina (strain NCIMB 400)).